We begin with the raw amino-acid sequence, 386 residues long: Rhomboid domain-containing protein 3 (386 aa).

5 helical membrane passes run 20–40, 58–78, 92–112, 141–161, and 163–183; these read VLMLLMSTLWLVGAGPGLVLA, LGHTALPGLLLSLLLLPTVGW, ASALLALASGLLAVLLAGLGL, GALPPWLSPWLLLALTPLLSS, and PPFLQLLCGLLAGLAYAAGAF. The UBA domain maps to 324-362; it reads VSSLRLQQLERMGFPTEQAVVALAATGRVEGAVSLLVGG.

Its subcellular location is the membrane. The sequence is that of Rhomboid domain-containing protein 3 (RHBDD3) from Homo sapiens (Human).